The following is a 212-amino-acid chain: Adenylate kinase (212 aa).

10-15 (GAGKGT) provides a ligand contact to ATP. The NMP stretch occupies residues 30–59 (STGDMFRAAMANQTEMGRLAKSYIDKGELV). Residues Thr31, Arg36, 57-59 (ELV), 86-89 (GYPR), and Gln93 contribute to the AMP site. The segment at 127–159 (GRIINRKTGETFHKVFNPPVDYKEEDYYQREDD) is LID. ATP contacts are provided by residues Arg128 and 137–138 (TF). AMP is bound by residues Arg156 and Arg167. Gln195 is an ATP binding site.

Belongs to the adenylate kinase family. Monomer.

Its subcellular location is the cytoplasm. The enzyme catalyses AMP + ATP = 2 ADP. Its pathway is purine metabolism; AMP biosynthesis via salvage pathway; AMP from ADP: step 1/1. In terms of biological role, catalyzes the reversible transfer of the terminal phosphate group between ATP and AMP. Plays an important role in cellular energy homeostasis and in adenine nucleotide metabolism. The sequence is that of Adenylate kinase from Streptococcus agalactiae serotype III (strain NEM316).